The sequence spans 295 residues: Bifunctional protein FolD (295 aa).

Residues 166-168 (GRS), S191, and I232 each bind NADP(+).

This sequence belongs to the tetrahydrofolate dehydrogenase/cyclohydrolase family. Homodimer.

The enzyme catalyses (6R)-5,10-methylene-5,6,7,8-tetrahydrofolate + NADP(+) = (6R)-5,10-methenyltetrahydrofolate + NADPH. It catalyses the reaction (6R)-5,10-methenyltetrahydrofolate + H2O = (6R)-10-formyltetrahydrofolate + H(+). It participates in one-carbon metabolism; tetrahydrofolate interconversion. Its function is as follows. Catalyzes the oxidation of 5,10-methylenetetrahydrofolate to 5,10-methenyltetrahydrofolate and then the hydrolysis of 5,10-methenyltetrahydrofolate to 10-formyltetrahydrofolate. In Rhodopseudomonas palustris (strain ATCC BAA-98 / CGA009), this protein is Bifunctional protein FolD.